The chain runs to 256 residues: DNA repair protein RecO (256 aa).

Belongs to the RecO family.

In terms of biological role, involved in DNA repair and RecF pathway recombination. The sequence is that of DNA repair protein RecO from Shouchella clausii (strain KSM-K16) (Alkalihalobacillus clausii).